The primary structure comprises 1886 residues: Nuclear pore membrane glycoprotein 210 (1886 aa).

Residues 1 to 25 form the signal peptide; sequence MARASLIQPGLWALLLLQAVGPAVA. At 26 to 1805 the chain is on the perinuclear space side; it reads AKLNIPKVLL…GASLLSHFLD (1780 aa). N-linked (GlcNAc...) asparagine glycans are attached at residues N337, N484, N681, and N1039. Residues 1078–1151 enclose the BIG2 domain; that stretch reads FPPFRLIPRK…VQAVDAETGK (74 aa). A helical transmembrane segment spans residues 1806–1828; it reads SYQVMFFTFFALLAGTAVTIIAY. Residues 1829-1886 lie on the Cytoplasmic side of the membrane; that stretch reads HTVCAPRELASPLALTPHASPQHSPHYLASSPTAFNTLPSDRKASPPSGLWSPAYASH. Phosphoserine is present on S1839. A Phosphothreonine modification is found at T1844. The tract at residues 1866–1886 is disordered; sequence LPSDRKASPPSGLWSPAYASH. A phosphoserine mark is found at S1873, S1876, S1880, and S1885.

This sequence belongs to the NUP210 family. Forms dimers and possibly higher-order oligomers. N-glycosylated, but not all potential glycosylation sites may be used. Contains high-mannose type oligosaccharides. Post-translationally, phosphorylated at Ser-1880 in mitosis specifically; not phosphorylated in interphase.

It is found in the nucleus. The protein localises to the nuclear pore complex. It localises to the nucleus membrane. The protein resides in the endoplasmic reticulum membrane. Functionally, nucleoporin essential for nuclear pore assembly and fusion, nuclear pore spacing, as well as structural integrity. This chain is Nuclear pore membrane glycoprotein 210 (Nup210), found in Rattus norvegicus (Rat).